Consider the following 101-residue polypeptide: Small ribosomal subunit protein bS18c (101 aa).

Residues 1-19 show a composition bias toward basic residues; sequence MDKSKRPFRKSKRSFRRRL. Disordered regions lie at residues 1–23 and 82–101; these read MDKS…PPIG and KQFE…TRNK.

The protein belongs to the bacterial ribosomal protein bS18 family. In terms of assembly, part of the 30S ribosomal subunit.

It localises to the plastid. The protein localises to the chloroplast. The sequence is that of Small ribosomal subunit protein bS18c from Drimys granadensis.